Reading from the N-terminus, the 780-residue chain is ATP-dependent 6-phosphofructokinase, muscle type (780 aa).

Thr2 bears the N-acetylthreonine mark. The N-terminal catalytic PFK domain 1 stretch occupies residues 2–390; it reads THEEHHAART…NWEVYKLLAH (389 aa). Residues Gly25, 88–89, and 118–121 each bind ATP; these read RC and GDGS. Asp119 is a Mg(2+) binding site. The residue at position 133 (Ser133) is a Phosphoserine. Residues 164–166, Arg201, 208–210, Glu264, Arg292, and 298–301 each bind substrate; these read SID, MGR, and HVQR. The active-site Proton acceptor is the Asp166. Ser377 bears the Phosphoserine mark. The interval 391–401 is interdomain linker; it reads IRPPAPKSGSY. The interval 402–780 is C-terminal regulatory PFK domain 2; it reads TVAVMNVGAP…SRKRSGEATV (379 aa). Beta-D-fructose 2,6-bisphosphate contacts are provided by residues Arg471 and 528–532; that span reads TVSNN. O-linked (GlcNAc) serine glycosylation is present at Ser530. Lys557 is subject to N6-(2-hydroxyisobutyryl)lysine. Beta-D-fructose 2,6-bisphosphate contacts are provided by residues Arg566, 573–575, Glu629, Arg655, and 661–664; these read MGG and HMQQ. Ser667 is subject to Phosphoserine. Arg735 contributes to the beta-D-fructose 2,6-bisphosphate binding site. The residue at position 775 (Ser775) is a Phosphoserine; by PKA.

It belongs to the phosphofructokinase type A (PFKA) family. ATP-dependent PFK group I subfamily. Eukaryotic two domain clade 'E' sub-subfamily. In terms of assembly, homo- and heterotetramers. Phosphofructokinase (PFK) enzyme functions as a tetramer composed of different combinations of 3 types of subunits, called PFKM (M), PFKL (L) and PFKP (P). The composition of the PFK tetramer differs according to the tissue type it is present in. The kinetic and regulatory properties of the tetrameric enzyme are dependent on the subunit composition, hence can vary across tissues. Interacts (via C-terminus) with HK1 (via N-terminal spermatogenic cell-specific region). Mg(2+) serves as cofactor. Post-translationally, glcNAcylation decreases enzyme activity.

The protein resides in the cytoplasm. The catalysed reaction is beta-D-fructose 6-phosphate + ATP = beta-D-fructose 1,6-bisphosphate + ADP + H(+). It functions in the pathway carbohydrate degradation; glycolysis; D-glyceraldehyde 3-phosphate and glycerone phosphate from D-glucose: step 3/4. With respect to regulation, allosterically activated by ADP, AMP, or fructose 2,6-bisphosphate, and allosterically inhibited by ATP or citrate. Catalyzes the phosphorylation of D-fructose 6-phosphate to fructose 1,6-bisphosphate by ATP, the first committing step of glycolysis. This chain is ATP-dependent 6-phosphofructokinase, muscle type (PFKM), found in Oryctolagus cuniculus (Rabbit).